Reading from the N-terminus, the 177-residue chain is Dual-action ribosomal maturation protein DarP (177 aa).

Residues 1–26 (MKIVGDSEHFKQPYDSDEEYVSKTED) are disordered.

This sequence belongs to the DarP family.

Its subcellular location is the cytoplasm. Functionally, member of a network of 50S ribosomal subunit biogenesis factors which assembles along the 30S-50S interface, preventing incorrect 23S rRNA structures from forming. Promotes peptidyl transferase center (PTC) maturation. The sequence is that of Dual-action ribosomal maturation protein DarP from Shewanella sp. (strain MR-4).